We begin with the raw amino-acid sequence, 228 residues long: 6-carboxyhexanoate--CoA ligase (228 aa).

This sequence belongs to the BioW family. Homodimer. Mg(2+) is required as a cofactor.

The enzyme catalyses heptanedioate + ATP + CoA = 6-carboxyhexanoyl-CoA + AMP + diphosphate. It functions in the pathway metabolic intermediate metabolism; pimeloyl-CoA biosynthesis; pimeloyl-CoA from pimelate: step 1/1. Catalyzes the transformation of pimelate into pimeloyl-CoA with concomitant hydrolysis of ATP to AMP. In Staphylococcus epidermidis (strain ATCC 35984 / DSM 28319 / BCRC 17069 / CCUG 31568 / BM 3577 / RP62A), this protein is 6-carboxyhexanoate--CoA ligase.